The primary structure comprises 200 residues: MQKFIIHKGIACPLEYANIDTDQIIPKQFLLAVSKQGFGKHLFHDLRYLDDKESVLNMDFNLNKKEYQNSSILVSFENFGSGSSREHAPWALVDYGIRAIIAPSFADIFKNNALGNGLLTIELAKDEVLGIVDELKKSQDKNIEISLLEKRVFFKDKIFSFDLDDFHRICLLEGLDNIALTLKHEAQIKAYEKNSKSFLV.

The protein belongs to the LeuD family. LeuD type 1 subfamily. As to quaternary structure, heterodimer of LeuC and LeuD.

The enzyme catalyses (2R,3S)-3-isopropylmalate = (2S)-2-isopropylmalate. Its pathway is amino-acid biosynthesis; L-leucine biosynthesis; L-leucine from 3-methyl-2-oxobutanoate: step 2/4. Its function is as follows. Catalyzes the isomerization between 2-isopropylmalate and 3-isopropylmalate, via the formation of 2-isopropylmaleate. The protein is 3-isopropylmalate dehydratase small subunit of Campylobacter jejuni subsp. jejuni serotype O:23/36 (strain 81-176).